We begin with the raw amino-acid sequence, 422 residues long: UDP-N-acetylglucosamine 1-carboxyvinyltransferase (422 aa).

22–23 lines the phosphoenolpyruvate pocket; the sequence is KN. Arg93 contacts UDP-N-acetyl-alpha-D-glucosamine. Catalysis depends on Cys117, which acts as the Proton donor. At Cys117 the chain carries 2-(S-cysteinyl)pyruvic acid O-phosphothioketal. Residues 122–126, 162–165, Asp307, and Ile329 contribute to the UDP-N-acetyl-alpha-D-glucosamine site; these read RPVDL and KVSV.

It belongs to the EPSP synthase family. MurA subfamily.

Its subcellular location is the cytoplasm. It carries out the reaction phosphoenolpyruvate + UDP-N-acetyl-alpha-D-glucosamine = UDP-N-acetyl-3-O-(1-carboxyvinyl)-alpha-D-glucosamine + phosphate. It functions in the pathway cell wall biogenesis; peptidoglycan biosynthesis. Its function is as follows. Cell wall formation. Adds enolpyruvyl to UDP-N-acetylglucosamine. The protein is UDP-N-acetylglucosamine 1-carboxyvinyltransferase of Hamiltonella defensa subsp. Acyrthosiphon pisum (strain 5AT).